The following is a 584-amino-acid chain: Arginine--tRNA ligase (584 aa).

A 'HIGH' region motif is present at residues Pro-126–His-136.

It belongs to the class-I aminoacyl-tRNA synthetase family. In terms of assembly, monomer.

The protein resides in the cytoplasm. It catalyses the reaction tRNA(Arg) + L-arginine + ATP = L-arginyl-tRNA(Arg) + AMP + diphosphate. The protein is Arginine--tRNA ligase of Nostoc punctiforme (strain ATCC 29133 / PCC 73102).